The chain runs to 341 residues: Glycerol-3-phosphate dehydrogenase [NAD(P)+] (341 aa).

Ser-14, Phe-15, Arg-35, and Lys-108 together coordinate NADPH. Positions 108 and 136 each coordinate sn-glycerol 3-phosphate. NADPH is bound at residue Ala-140. Positions 191, 244, 254, 255, and 256 each coordinate sn-glycerol 3-phosphate. The active-site Proton acceptor is the Lys-191. Residue Arg-255 participates in NADPH binding. Val-279 and Glu-281 together coordinate NADPH.

It belongs to the NAD-dependent glycerol-3-phosphate dehydrogenase family.

It localises to the cytoplasm. The enzyme catalyses sn-glycerol 3-phosphate + NAD(+) = dihydroxyacetone phosphate + NADH + H(+). It catalyses the reaction sn-glycerol 3-phosphate + NADP(+) = dihydroxyacetone phosphate + NADPH + H(+). Its pathway is membrane lipid metabolism; glycerophospholipid metabolism. Catalyzes the reduction of the glycolytic intermediate dihydroxyacetone phosphate (DHAP) to sn-glycerol 3-phosphate (G3P), the key precursor for phospholipid synthesis. This Pseudomonas fluorescens (strain SBW25) protein is Glycerol-3-phosphate dehydrogenase [NAD(P)+].